A 248-amino-acid polypeptide reads, in one-letter code: MKSILNDFLLMIQFFTRIPVNKNLQCEKENFKRGAFFLPVVAFIIGGMEFLIYLGLKNFLPANVIIVLLILFTAMITGGLHMDGLADTCDGFFSLRDKERIIEIMKDSRIGSYGTIALIIDLLLKYQLLYSLVLKGYSIAIVLAPIIGRISILFLCLSKRTAKKNGSGNIFIGNMSKPIIFFITTIVLVLSTYFLGLRATIIPFIGVLLITYLLYLLCLNKINGLTGDTLGACNELGEITFLLILLMM.

6 helical membrane-spanning segments follow: residues 36–56 (FFLPVVAFIIGGMEFLIYLGL), 59–79 (FLPANVIIVLLILFTAMITGG), 114–134 (GTIALIIDLLLKYQLLYSLVL), 137–157 (YSIAIVLAPIIGRISILFLCL), 170–190 (IFIGNMSKPIIFFITTIVLVL), and 199–219 (ATIIPFIGVLLITYLLYLLCL).

The protein belongs to the CobS family. The cofactor is Mg(2+).

It is found in the cell membrane. It carries out the reaction alpha-ribazole + adenosylcob(III)inamide-GDP = adenosylcob(III)alamin + GMP + H(+). The enzyme catalyses alpha-ribazole 5'-phosphate + adenosylcob(III)inamide-GDP = adenosylcob(III)alamin 5'-phosphate + GMP + H(+). Its pathway is cofactor biosynthesis; adenosylcobalamin biosynthesis; adenosylcobalamin from cob(II)yrinate a,c-diamide: step 7/7. Joins adenosylcobinamide-GDP and alpha-ribazole to generate adenosylcobalamin (Ado-cobalamin). Also synthesizes adenosylcobalamin 5'-phosphate from adenosylcobinamide-GDP and alpha-ribazole 5'-phosphate. The protein is Adenosylcobinamide-GDP ribazoletransferase of Clostridium botulinum (strain Langeland / NCTC 10281 / Type F).